Here is a 307-residue protein sequence, read N- to C-terminus: Cyclooctat-9-en-7-ol synthase (307 aa).

Mg(2+) is bound by residues Asp-110, Asn-220, Ser-224, and Glu-228. Residues 110–113 (DDMD) carry the DDXXD motif; degenerate motif. The NSE/DTE motif signature appears at 220-228 (NDFYSYDRE).

It belongs to the terpene synthase family. In terms of assembly, homodimer. It depends on Mg(2+) as a cofactor.

It carries out the reaction geranylgeranyl diphosphate + H2O = cyclooctat-9-en-7-ol + diphosphate. Catalyzes the cyclization of the linear isoprenoid intermediate geranylgeranyl diphosphate to tricycclic cyclooctat-9-en-7-ol in the cyclooctatin biosynthesis pathway. Cyclooctatin is a potent inhibitor of lysophospholipase. This Streptomyces melanosporofaciens protein is Cyclooctat-9-en-7-ol synthase.